A 137-amino-acid chain; its full sequence is NADH-quinone oxidoreductase subunit A 1 (137 aa).

3 consecutive transmembrane segments (helical) span residues 14 to 34 (FAAF…VSAL), 66 to 86 (FYLV…LFAW), and 95 to 115 (WAGL…LVYL).

The protein belongs to the complex I subunit 3 family. In terms of assembly, NDH-1 is composed of 13 different subunits. Subunits NuoA, H, J, K, L, M, N constitute the membrane sector of the complex.

The protein resides in the cell inner membrane. The enzyme catalyses a quinone + NADH + 5 H(+)(in) = a quinol + NAD(+) + 4 H(+)(out). In terms of biological role, NDH-1 shuttles electrons from NADH, via FMN and iron-sulfur (Fe-S) centers, to quinones in the respiratory chain. The immediate electron acceptor for the enzyme in this species is believed to be ubiquinone. Couples the redox reaction to proton translocation (for every two electrons transferred, four hydrogen ions are translocated across the cytoplasmic membrane), and thus conserves the redox energy in a proton gradient. This is NADH-quinone oxidoreductase subunit A 1 from Pseudomonas paraeruginosa (strain DSM 24068 / PA7) (Pseudomonas aeruginosa (strain PA7)).